The chain runs to 186 residues: Shikimate kinase (186 aa).

Residue 15 to 20 (GAGKTT) coordinates ATP. Position 19 (T19) interacts with Mg(2+). 3 residues coordinate substrate: D37, R61, and G83. R121 lines the ATP pocket. R140 is a substrate binding site.

The protein belongs to the shikimate kinase family. As to quaternary structure, monomer. Mg(2+) serves as cofactor.

The protein resides in the cytoplasm. The enzyme catalyses shikimate + ATP = 3-phosphoshikimate + ADP + H(+). Its pathway is metabolic intermediate biosynthesis; chorismate biosynthesis; chorismate from D-erythrose 4-phosphate and phosphoenolpyruvate: step 5/7. Functionally, catalyzes the specific phosphorylation of the 3-hydroxyl group of shikimic acid using ATP as a cosubstrate. The polypeptide is Shikimate kinase (Psychrobacter arcticus (strain DSM 17307 / VKM B-2377 / 273-4)).